We begin with the raw amino-acid sequence, 370 residues long: Tryptophan--tRNA ligase (370 aa).

Positions 75–83 match the 'HIGH' region motif; that stretch reads PSGKMHFGH. The short motif at 255–259 is the 'KMSKS' region element; the sequence is KMSSS.

Belongs to the class-I aminoacyl-tRNA synthetase family.

The protein localises to the cytoplasm. It carries out the reaction tRNA(Trp) + L-tryptophan + ATP = L-tryptophyl-tRNA(Trp) + AMP + diphosphate + H(+). This is Tryptophan--tRNA ligase from Methanocaldococcus jannaschii (strain ATCC 43067 / DSM 2661 / JAL-1 / JCM 10045 / NBRC 100440) (Methanococcus jannaschii).